The primary structure comprises 301 residues: MPGIKEIRTKIKSVQNTRKITKAMEMVAASKMRKAQDRMRAGRPYATKVREIAAHLMQANPEYSHPYLVEREIKAVGVVLVTTDKGLCGGLNTNISRVTLAKLKEFDQRGIRVQATAFGNKGLGLLTRIGANLVSHEVQLGDKPDLDRLLGAIKVQLDAYLSGEIDALYVAATRFVNTMKQEPVFLRLLPLASGLDDPFQTGAETLADGAEVKSNYSWDYIYEPDAKSVIDDLLQRYVEGLLYQAVAENMASEQSARMVAMKAASDNAKKVIGDLQLVYNKTRQAAITKEISEIVGGAAAV.

Belongs to the ATPase gamma chain family. As to quaternary structure, F-type ATPases have 2 components, CF(1) - the catalytic core - and CF(0) - the membrane proton channel. CF(1) has five subunits: alpha(3), beta(3), gamma(1), delta(1), epsilon(1). CF(0) has three main subunits: a, b and c.

The protein localises to the cell inner membrane. Functionally, produces ATP from ADP in the presence of a proton gradient across the membrane. The gamma chain is believed to be important in regulating ATPase activity and the flow of protons through the CF(0) complex. This Bordetella petrii (strain ATCC BAA-461 / DSM 12804 / CCUG 43448) protein is ATP synthase gamma chain.